A 259-amino-acid polypeptide reads, in one-letter code: Ribosomal RNA small subunit methyltransferase J (259 aa).

Residues 101 to 102, 117 to 118, 153 to 154, and Asp-176 each bind S-adenosyl-L-methionine; these read RD, ER, and SS.

The protein belongs to the methyltransferase superfamily. RsmJ family.

The protein localises to the cytoplasm. The catalysed reaction is guanosine(1516) in 16S rRNA + S-adenosyl-L-methionine = N(2)-methylguanosine(1516) in 16S rRNA + S-adenosyl-L-homocysteine + H(+). Functionally, specifically methylates the guanosine in position 1516 of 16S rRNA. The polypeptide is Ribosomal RNA small subunit methyltransferase J (Vibrio parahaemolyticus serotype O3:K6 (strain RIMD 2210633)).